Consider the following 389-residue polypeptide: Chalcone synthase 4-2 (389 aa).

Residue Cys164 is part of the active site.

It belongs to the thiolase-like superfamily. Chalcone/stilbene synthases family.

It carries out the reaction (E)-4-coumaroyl-CoA + 3 malonyl-CoA + 3 H(+) = 2',4,4',6'-tetrahydroxychalcone + 3 CO2 + 4 CoA. It participates in secondary metabolite biosynthesis; flavonoid biosynthesis. Its function is as follows. The primary product of this enzyme is 4,2',4',6'-tetrahydroxychalcone (also termed naringenin-chalcone or chalcone) which can under specific conditions spontaneously isomerize into naringenin. This chain is Chalcone synthase 4-2 (CHS4-2), found in Medicago sativa (Alfalfa).